Here is a 539-residue protein sequence, read N- to C-terminus: Eukaryotic translation initiation factor 3 subunit L (539 aa).

Residues 306 to 514 (TFSDILLYIQ…IHIADTKVSH (209 aa)) enclose the PCI domain.

The protein belongs to the eIF-3 subunit L family. Component of the eukaryotic translation initiation factor 3 (eIF-3) complex. The eIF-3 complex interacts with pix.

It is found in the cytoplasm. Component of the eukaryotic translation initiation factor 3 (eIF-3) complex, which is involved in protein synthesis of a specialized repertoire of mRNAs and, together with other initiation factors, stimulates binding of mRNA and methionyl-tRNAi to the 40S ribosome. The eIF-3 complex specifically targets and initiates translation of a subset of mRNAs involved in cell proliferation. In Drosophila ananassae (Fruit fly), this protein is Eukaryotic translation initiation factor 3 subunit L.